The following is a 274-amino-acid chain: Kit ligand (274 aa).

A signal peptide spans 1–25; it reads MKKTQTWIITCIYLQLLLFNPLVHS. Position 26 is a pyrrolidone carboxylic acid (glutamine 26). Residues 26-215 are Extracellular-facing; that stretch reads QGICRNRVTD…SNSIEDSSLQ (190 aa). 2 cysteine pairs are disulfide-bonded: cysteine 29/cysteine 114 and cysteine 68/cysteine 164. N-linked (GlcNAc...) asparagine glycosylation is found at asparagine 90, asparagine 97, asparagine 145, and asparagine 196. The chain crosses the membrane as a helical span at residues 216 to 238; the sequence is WAAVALPAFFSLVIGFAFGALYW. The Cytoplasmic segment spans residues 239 to 274; it reads KKKQPNLTRTVENRQINEEDNEISMLQEKEREFQEV.

This sequence belongs to the SCF family. In terms of assembly, homodimer, non-covalently linked. A soluble form is produced by proteolytic processing of the extracellular domain.

The protein localises to the cytoplasm. It localises to the cytoskeleton. It is found in the cell membrane. Its subcellular location is the cell projection. The protein resides in the lamellipodium. The protein localises to the filopodium. It localises to the secreted. Stimulates the proliferation of mast cells. Able to augment the proliferation of both myeloid and lymphoid hematopoietic progenitors in bone marrow culture. Also mediates cell-cell adhesion. Acts synergistically with other cytokines, probably interleukins. This is Kit ligand (KITLG) from Capra hircus (Goat).